Here is a 481-residue protein sequence, read N- to C-terminus: UDP-N-acetylmuramate--L-alanine ligase (481 aa).

An ATP-binding site is contributed by glycine 122–threonine 128.

It belongs to the MurCDEF family.

The protein localises to the cytoplasm. The catalysed reaction is UDP-N-acetyl-alpha-D-muramate + L-alanine + ATP = UDP-N-acetyl-alpha-D-muramoyl-L-alanine + ADP + phosphate + H(+). Its pathway is cell wall biogenesis; peptidoglycan biosynthesis. Functionally, cell wall formation. This Treponema pallidum (strain Nichols) protein is UDP-N-acetylmuramate--L-alanine ligase.